A 1036-amino-acid polypeptide reads, in one-letter code: MRSYLFIPLLVSFLFPVALANASLEKNLVDTNLYLSPNTIQNRSYTAGFNLKNDYFRKSFNFDNEVIQRPNQNNYFAKTYSNEWSELVNKYSDNYKQIIRDNNFHWYNNIYYLKNIKLKIESSYIAHAFSSTFRYPGIRNSWSSDIHSEQRFYFHSQAISNFFPRDGHTNEKWTEVPSRNIEITGTNPDGSWNKSWYKPDNPYFWDLTKPSHKKAYFIEAKFVHMWGSTLRMIKPTPEDVIRNIKWLRKGNNGNYVIDFNAPMWYYLGQESRGFFADWKNNIFVAPDFWWGLAMTPIRAYRFWWDLELVKVPPVFEQNNAQWNEPFPGRSSWFFSINSNKQVDAHWMSINEFKEKMKKDRKIIEAFTNNREITQTILRLGNGLVVRPETEDSRREAFNSKWDIFKHTPILPEQEVVHHQISFYLRQNNPDEVLPISFSNLSKLWISQLEFDINSLVSQTEKTLNKETIGTKIKPTIKFKDKFINAIKEVSLINQRIDESIDKNEALKSFNISTNNQSNFYPNLDYLYNLLQMSPNNKEELFFIRNLPRMVKTIFDRSTLTVKVKIGNSVNEITLLRNNKNYFDLSSIEEFLTEKQKADNEMNIEFLALNFFVDGYESENISNYSVEPLFDSIKKLSTIKRTKDGFEYKFKYRKDFNEQRWIAKDFRIPLNKNVQNFNVAELKKRNEKFNDYEKRQMAFIIKNSFKSKDKNIDLDINSNSLTFVDNPKKYFKHLEPTNEKKGIFYVLAEINNSNELFKYGSESDSEIIKDKMYFLSQNQKNPKLRTYLFKFHTNKLFVDKNDLGFKLEKDKVFLSVDNLKIAELDLKSSSFKFLEDYQLDFHEPFSLNDEQLLVDKLNITLSEKRLQTTKNVRFNLKNKFINIHLVENKNQFNLVFDVDVRSKKLFIKGVNNDNQVFSISYDLKITNNQTLLIVDANGFDNSIWFDITSENQTQLFKALSFYLKQNNLQFKRVPDFNLKSQDKSYEVDKLEKNEIKKQDTNVELILWVIFGIIISLMISSAVLFLKWRKKKIVKKRN.

Helical transmembrane passes span 4–24 (YLFI…NASL) and 1004–1024 (ILWV…VLFL).

It belongs to the MG414/MG415 family.

The protein localises to the cell membrane. This is an uncharacterized protein from Mycoplasma genitalium (strain ATCC 33530 / DSM 19775 / NCTC 10195 / G37) (Mycoplasmoides genitalium).